The primary structure comprises 504 residues: ATP synthase subunit alpha, chloroplastic (504 aa).

170 to 177 provides a ligand contact to ATP; it reads GDRQTGKT.

This sequence belongs to the ATPase alpha/beta chains family. In terms of assembly, F-type ATPases have 2 components, CF(1) - the catalytic core - and CF(0) - the membrane proton channel. CF(1) has five subunits: alpha(3), beta(3), gamma(1), delta(1), epsilon(1). CF(0) has four main subunits: a, b, b' and c.

It is found in the plastid. The protein resides in the chloroplast thylakoid membrane. The enzyme catalyses ATP + H2O + 4 H(+)(in) = ADP + phosphate + 5 H(+)(out). Its function is as follows. Produces ATP from ADP in the presence of a proton gradient across the membrane. The alpha chain is a regulatory subunit. In Triticum aestivum (Wheat), this protein is ATP synthase subunit alpha, chloroplastic.